A 338-amino-acid chain; its full sequence is MGSTGSVSAWDEALLIAAIQYPVPIIRGPEDIQVQVQQICKTMDSTKAGYPDLDFIVFPEYSAQGLNTKIWTYDEMLLSLDSPEIDCFRRACIRNDVWGVFSIMERNEDPSQIPYNTAIIINSNGEIVLHYRKLQPWVPIEPWMPGNLGMPVCEGPKGAKLAVCICHDGMFPELAREAAYKGCNVFIRISGYSTQVNDQWIWTNRTNAWQNLMYTVSVNLAGYDEVFYYFGEGTICNYDGNIIQQGQRNPWEIVTAELFPRLADKARENWALENSIFNLGCRGYVGKPGGERANYLTWVRDLANGEYKLPWDENIRIRDGWKYYPEGVKLGPLPKIDE.

One can recognise a CN hydrolase domain in the interval 14-260; that stretch reads LLIAAIQYPV…WEIVTAELFP (247 aa). E60 functions as the Proton acceptor in the catalytic mechanism. K133 acts as the Proton donor in catalysis. C166 acts as the Nucleophile in catalysis.

Belongs to the carbon-nitrogen hydrolase superfamily. Aliphatic amidase family.

The catalysed reaction is formamide + H2O = formate + NH4(+). Functionally, is an aliphatic amidase with a restricted substrate specificity, as it only hydrolyzes formamide. The chain is Formamidase from Photorhabdus laumondii subsp. laumondii (strain DSM 15139 / CIP 105565 / TT01) (Photorhabdus luminescens subsp. laumondii).